Reading from the N-terminus, the 524-residue chain is Putative mediator of RNA polymerase II transcription subunit 8 (524 aa).

Coiled coils occupy residues 117–146 and 175–211; these read LKLH…SKHK and NAQQ…QQQQ. Disordered regions lie at residues 312–340, 356–379, and 430–451; these read VASP…QPSI, LPNT…IGGG, and QQNQ…IQHL. Over residues 314-333 the composition is skewed to polar residues; that stretch reads SPQQQVTSKQVPIQSTNKPL. Low complexity predominate over residues 356–374; the sequence is LPNTTSPPVNNNNQSPINS. Positions 398–478 form a coiled coil; the sequence is IQQQIQLQQQ…LQQQFQQQQL (81 aa).

It belongs to the Mediator complex subunit 8 family. Component of the Mediator complex. May be part of a multisubunit E3 ubiquitin-protein ligase complex.

It localises to the nucleus. It participates in protein modification; protein ubiquitination. Its function is as follows. Component of the Mediator complex, a coactivator involved in the regulated transcription of nearly all RNA polymerase II-dependent genes. Mediator functions as a bridge to convey information from gene-specific regulatory proteins to the basal RNA polymerase II transcription machinery. Mediator is recruited to promoters by direct interactions with regulatory proteins and serves as a scaffold for the assembly of a functional preinitiation complex with RNA polymerase II and the general transcription factors. May play a role as a target recruitment subunit in E3 ubiquitin-protein ligase complexes and thus in ubiquitination and subsequent proteasomal degradation of target proteins. This chain is Putative mediator of RNA polymerase II transcription subunit 8 (med8), found in Dictyostelium discoideum (Social amoeba).